Reading from the N-terminus, the 548-residue chain is Non-structural protein NS1 (548 aa).

This sequence belongs to the orbivirus non-structural protein NS1 family.

In Camelus dromedarius (Dromedary), this protein is Non-structural protein NS1 (Segment-5).